A 1072-amino-acid chain; its full sequence is Carbamoyl phosphate synthase large chain (1072 aa).

The interval 1–401 (MPKRLDINTI…SLLKAVRSLE (401 aa)) is carboxyphosphate synthetic domain. Arg129, Arg169, Gly175, Gly176, Lys208, Ile210, Glu215, Gly241, Val242, His243, Gln284, and Glu298 together coordinate ATP. Residues 133–327 (RTLMQELNEP…IAKLAAKIAV (195 aa)) form the ATP-grasp 1 domain. Positions 284, 298, and 300 each coordinate Mg(2+). Mn(2+)-binding residues include Gln284, Glu298, and Asn300. Residues 402–546 (LGIYHLELDH…YSTYADENES (145 aa)) are oligomerization domain. Positions 547–929 (IVTDRKSVVV…ALYKGLVASG (383 aa)) are carbamoyl phosphate synthetic domain. Residues 671–861 (EAALTKLGIP…MANVATKVIL (191 aa)) enclose the ATP-grasp 2 domain. The ATP site is built by Arg707, Arg746, Glu752, Gly777, Val778, His779, Ser780, Gln820, and Glu832. Mg(2+) is bound by residues Gln820, Glu832, and Asn834. 3 residues coordinate Mn(2+): Gln820, Glu832, and Asn834. Residues 930 to 1072 (INIPTHGSVI…QTKRHEVVHA (143 aa)) enclose the MGS-like domain. The allosteric domain stretch occupies residues 930–1072 (INIPTHGSVI…QTKRHEVVHA (143 aa)).

This sequence belongs to the CarB family. Composed of two chains; the small (or glutamine) chain promotes the hydrolysis of glutamine to ammonia, which is used by the large (or ammonia) chain to synthesize carbamoyl phosphate. Tetramer of heterodimers (alpha,beta)4. Mg(2+) serves as cofactor. Mn(2+) is required as a cofactor.

It carries out the reaction hydrogencarbonate + L-glutamine + 2 ATP + H2O = carbamoyl phosphate + L-glutamate + 2 ADP + phosphate + 2 H(+). It catalyses the reaction hydrogencarbonate + NH4(+) + 2 ATP = carbamoyl phosphate + 2 ADP + phosphate + 2 H(+). The protein operates within amino-acid biosynthesis; L-arginine biosynthesis; carbamoyl phosphate from bicarbonate: step 1/1. It participates in pyrimidine metabolism; UMP biosynthesis via de novo pathway; (S)-dihydroorotate from bicarbonate: step 1/3. Its function is as follows. Large subunit of the glutamine-dependent carbamoyl phosphate synthetase (CPSase). CPSase catalyzes the formation of carbamoyl phosphate from the ammonia moiety of glutamine, carbonate, and phosphate donated by ATP, constituting the first step of 2 biosynthetic pathways, one leading to arginine and/or urea and the other to pyrimidine nucleotides. The large subunit (synthetase) binds the substrates ammonia (free or transferred from glutamine from the small subunit), hydrogencarbonate and ATP and carries out an ATP-coupled ligase reaction, activating hydrogencarbonate by forming carboxy phosphate which reacts with ammonia to form carbamoyl phosphate. The chain is Carbamoyl phosphate synthase large chain from Bacillus cereus (strain AH820).